A 150-amino-acid polypeptide reads, in one-letter code: 3-hydroxyacyl-[acyl-carrier-protein] dehydratase FabZ (150 aa).

Histidine 53 is a catalytic residue.

It belongs to the thioester dehydratase family. FabZ subfamily.

The protein resides in the cytoplasm. It carries out the reaction a (3R)-hydroxyacyl-[ACP] = a (2E)-enoyl-[ACP] + H2O. Functionally, involved in unsaturated fatty acids biosynthesis. Catalyzes the dehydration of short chain beta-hydroxyacyl-ACPs and long chain saturated and unsaturated beta-hydroxyacyl-ACPs. The polypeptide is 3-hydroxyacyl-[acyl-carrier-protein] dehydratase FabZ (Proteus mirabilis (strain HI4320)).